The sequence spans 151 residues: MDERELQALVERISLDVFHKPFRHRAVFNDRLRTTGGRYVLSTHHIELNRKYYEQYGEEELIQVIKHELCHYHLYLEGKGYRHRDRDFRELLQKVQAPRFCKPVLLSKTKKEHYYKCTSCRYMYVRRKALDTTRYVCGFCRGKLKKIKREC.

The SprT-like domain maps to 6–148 (LQALVERISL…FCRGKLKKIK (143 aa)). Position 67 (H67) interacts with Zn(2+). The active site involves E68. H71 contributes to the Zn(2+) binding site.

The protein belongs to the SprT family. Zn(2+) serves as cofactor.

Its subcellular location is the cytoplasm. This is Protein SprT-like from Anoxybacillus flavithermus (strain DSM 21510 / WK1).